Here is a 618-residue protein sequence, read N- to C-terminus: Probable N-acetylgalactosaminyltransferase 6 (618 aa).

Over 1 to 16 the chain is Cytoplasmic; sequence MIASLIRSRRRSRRCV. Residues 17-39 traverse the membrane as a helical; Signal-anchor for type II membrane protein segment; it reads VYSVFLFGFLALWGSFALALVFL. Over 40–618 the chain is Lumenal; sequence SDMYIGEDQI…TEMSWLPEHP (579 aa). N-linked (GlcNAc...) asparagine glycosylation is found at N81 and N149. Cystine bridges form between C147–C381 and C372–C452. The segment at 156 to 267 is catalytic subdomain A; sequence LPTTSVIIVY…KGWLEPLLTR (112 aa). Substrate is bound by residues D197 and R228. D251 contacts Mn(2+). S252 contributes to the substrate binding site. H253 lines the Mn(2+) pocket. The segment at 327-389 is catalytic subdomain B; it reads PIESPTMAGG…PCSHVGHVFR (63 aa). W358 contributes to the substrate binding site. H386 contacts Mn(2+). Residue R389 participates in substrate binding. The region spanning 474–609 is the Ricin B-type lectin domain; that stretch reads RFGRMTSSSN…SNDRQNWTIT (136 aa). A glycan (N-linked (GlcNAc...) asparagine) is linked at N483. 3 disulfide bridges follow: C487-C505, C530-C550, and C575-C597. An N-linked (GlcNAc...) asparagine glycan is attached at N605.

Belongs to the glycosyltransferase 2 family. GalNAc-T subfamily. The cofactor is Mn(2+).

The protein resides in the golgi apparatus membrane. The protein operates within protein modification; protein glycosylation. Functionally, probable glycopeptide transferase involved in O-linked oligosaccharide biosynthesis. Glycopeptide transferases catalyze the transfer of an N-acetyl-D-galactosamine residue to an already glycosylated peptide. In contrast to other members of the family, it does not act as a peptide transferase that transfers GalNAc onto serine or threonine residue on peptides that have been tested. Some peptide transferase activity is however not excluded, considering that its appropriate peptide substrate may remain unidentified. The chain is Probable N-acetylgalactosaminyltransferase 6 (gly-6) from Caenorhabditis elegans.